The sequence spans 539 residues: uncharacterized protein (539 aa).

This sequence belongs to the transposase 25 family.

This is an uncharacterized protein from Sinorhizobium fredii (strain NBRC 101917 / NGR234).